Consider the following 285-residue polypeptide: tRNA (guanine-N(7)-)-methyltransferase (285 aa).

S-adenosyl-L-methionine is bound by residues G102, 125–126 (EI), 160–161 (NA), and C180. D183 is a catalytic residue. 258 to 260 (TEE) lines the S-adenosyl-L-methionine pocket.

This sequence belongs to the class I-like SAM-binding methyltransferase superfamily. TrmB family. Forms a complex with TRM82.

It is found in the nucleus. The enzyme catalyses guanosine(46) in tRNA + S-adenosyl-L-methionine = N(7)-methylguanosine(46) in tRNA + S-adenosyl-L-homocysteine. Its pathway is tRNA modification; N(7)-methylguanine-tRNA biosynthesis. Catalyzes the formation of N(7)-methylguanine at position 46 (m7G46) in tRNA. The sequence is that of tRNA (guanine-N(7)-)-methyltransferase from Candida glabrata (strain ATCC 2001 / BCRC 20586 / JCM 3761 / NBRC 0622 / NRRL Y-65 / CBS 138) (Yeast).